Here is a 169-residue protein sequence, read N- to C-terminus: uncharacterized protein (169 aa).

Disordered regions lie at residues V32 to P53 and V148 to A169.

This is an uncharacterized protein from Homo sapiens (Human).